Here is a 374-residue protein sequence, read N- to C-terminus: Lipoyl synthase, mitochondrial (374 aa).

Residues C101, C106, C112, C132, C136, C139, and S347 each contribute to the [4Fe-4S] cluster site. In terms of domain architecture, Radical SAM core spans 117–336 (ENGTQTATIM…EERGNDLGFL (220 aa)).

This sequence belongs to the radical SAM superfamily. Lipoyl synthase family. The cofactor is [4Fe-4S] cluster.

It is found in the mitochondrion. The enzyme catalyses [[Fe-S] cluster scaffold protein carrying a second [4Fe-4S](2+) cluster] + N(6)-octanoyl-L-lysyl-[protein] + 2 oxidized [2Fe-2S]-[ferredoxin] + 2 S-adenosyl-L-methionine + 4 H(+) = [[Fe-S] cluster scaffold protein] + N(6)-[(R)-dihydrolipoyl]-L-lysyl-[protein] + 4 Fe(3+) + 2 hydrogen sulfide + 2 5'-deoxyadenosine + 2 L-methionine + 2 reduced [2Fe-2S]-[ferredoxin]. Its pathway is protein modification; protein lipoylation via endogenous pathway; protein N(6)-(lipoyl)lysine from octanoyl-[acyl-carrier-protein]: step 2/2. Catalyzes the radical-mediated insertion of two sulfur atoms into the C-6 and C-8 positions of the octanoyl moiety bound to the lipoyl domains of lipoate-dependent enzymes, thereby converting the octanoylated domains into lipoylated derivatives. In Drosophila pseudoobscura pseudoobscura (Fruit fly), this protein is Lipoyl synthase, mitochondrial.